Consider the following 788-residue polypeptide: Endonuclease MutS2 (788 aa).

ATP is bound at residue 332–339 (GPNTGGKT). One can recognise a Smr domain in the interval 713 to 788 (VDLRGMDAEE…GTGVTVVEIK (76 aa)).

It belongs to the DNA mismatch repair MutS family. MutS2 subfamily. Homodimer. Binds to stalled ribosomes, contacting rRNA.

Its function is as follows. Endonuclease that is involved in the suppression of homologous recombination and thus may have a key role in the control of bacterial genetic diversity. Acts as a ribosome collision sensor, splitting the ribosome into its 2 subunits. Detects stalled/collided 70S ribosomes which it binds and splits by an ATP-hydrolysis driven conformational change. Acts upstream of the ribosome quality control system (RQC), a ribosome-associated complex that mediates the extraction of incompletely synthesized nascent chains from stalled ribosomes and their subsequent degradation. Probably generates substrates for RQC. This is Endonuclease MutS2 from Clostridium botulinum (strain 657 / Type Ba4).